Consider the following 142-residue polypeptide: Universal stress protein C (142 aa).

Belongs to the universal stress protein A family.

The protein localises to the cytoplasm. Functionally, required for resistance to DNA-damaging agents. The polypeptide is Universal stress protein C (uspC) (Escherichia coli O157:H7).